A 386-amino-acid chain; its full sequence is MTIKNNNNNNTLKHLQAFPPLKNDNLLRAARGEVVDRVPVWVMRQAGRYLPEFQELRKQHDFFTVCRTPELACEVTMQPLRRFDLDASIIFSDILVIPQALGLTVEMHAGVGPVLPQPICTPEDLKRLTPDGALSRLTYVGDAITMMRHKLDGRVPLIGFTGAPWTLMGYMIEGGGSKTMSKAKAWLTNYPEDTKLFLILLTDVIVDYLEMQVIAGAQMLQVFESSAEHLSKEEFLLGSEPYLRRIRDDLVDRLTKKVIPAVPLVSSYPNNIFTLLTYLISLLIIFAKGAGHSLKEQSELGYDVIGLDWTVDPVEARAVVGPNITLQGNLDPQSMYCEPNELRSLATEMVHKCGKSRYIANVGHGITPQTPITSMEVLVEAAHNAL.

The coproporphyrinogen I site is built by R44, A46, R48, R57, D93, Y170, S225, and H364. Residues R44, A46, and R48 each coordinate coproporphyrinogen III. D93, Y170, S225, and H364 together coordinate coproporphyrinogen III.

Belongs to the uroporphyrinogen decarboxylase family. Homodimer.

It localises to the cytoplasm. The protein localises to the cytosol. The enzyme catalyses uroporphyrinogen III + 4 H(+) = coproporphyrinogen III + 4 CO2. It functions in the pathway porphyrin-containing compound metabolism; protoporphyrin-IX biosynthesis; coproporphyrinogen-III from 5-aminolevulinate: step 4/4. Functionally, catalyzes the decarboxylation of four acetate groups of uroporphyrinogen-III to yield coproporphyrinogen-III. The chain is Uroporphyrinogen decarboxylase from Drosophila virilis (Fruit fly).